The primary structure comprises 328 residues: uncharacterized protein (328 aa).

An N-terminal signal peptide occupies residues 1-32 (MFNFRLFSRRGKSLGLLAIVLLLFGFYSLKSS).

Belongs to the glycosyltransferase 34 family.

The protein localises to the endoplasmic reticulum. This is an uncharacterized protein from Schizosaccharomyces pombe (strain 972 / ATCC 24843) (Fission yeast).